The chain runs to 84 residues: Sulfur carrier protein TusA (84 aa).

Residue C19 is the Cysteine persulfide intermediate of the active site.

This sequence belongs to the sulfur carrier protein TusA family. Interacts with IscS.

It is found in the cytoplasm. The protein operates within tRNA modification. Sulfur carrier protein involved in sulfur trafficking in the cell. Part of a sulfur-relay system required for 2-thiolation during synthesis of 2-thiouridine of the modified wobble base 5-methylaminomethyl-2-thiouridine (mnm(5)s(2)U) in tRNA. Interacts with IscS and stimulates its cysteine desulfurase activity. Accepts an activated sulfur from IscS, which is then transferred to TusD, and thus determines the direction of sulfur flow from IscS to 2-thiouridine formation. Also appears to be involved in sulfur transfer for the biosynthesis of molybdopterin. The chain is Sulfur carrier protein TusA from Yersinia pseudotuberculosis serotype O:1b (strain IP 31758).